We begin with the raw amino-acid sequence, 260 residues long: Emerin (260 aa).

M1 is modified (N-acetylmethionine). One can recognise an LEM domain in the interval 1-45; sequence MDDYAVLSDTELAAVLRQYNIPHGPILGSTRKLYEKKIFEYETQR. Phosphoserine is present on residues S8 and S29. The interaction with F-actin stretch occupies residues 46–224; it reads RRLSPPSSSS…PTAALGQDRQ (179 aa). Residue S49 is modified to Phosphoserine; by PKA. A phosphoserine mark is found at S54, S69, S72, S88, S99, S142, S143, and S144. Y162 carries the post-translational modification Phosphotyrosine. Positions 169-188 are interaction with CTNNB1; the sequence is RPISNVSRSSLGLSYYPRSS. Phosphoserine occurs at positions 172, 175, and 177. The tract at residues 184–206 is disordered; sequence YPRSSTSSVSSSSSSPSSWLTRR. Low complexity predominate over residues 187–201; sequence SSTSSVSSSSSSPSS. Residues 225-245 traverse the membrane as a helical segment; it reads VPLWGQLLLFLAFATFLLFVY.

In terms of assembly, interacts with lamins A and C, BANF1, GMCL, BCLAF1 and YTHDC1/YT521. Interacts with TMEM43; the interaction retains emerin in the inner nuclear membrane. Interacts with ACTB, SPTAN1, F-actin, CTNNB1 and beta-tubulin. Interacts with SUN1 and SUN2. Interacts with TMEM201. Interacts with NEMP1.

The protein localises to the nucleus inner membrane. The protein resides in the nucleus outer membrane. In terms of biological role, stabilizes and promotes the formation of a nuclear actin cortical network. Stimulates actin polymerization in vitro by binding and stabilizing the pointed end of growing filaments. Inhibits beta-catenin activity by preventing its accumulation in the nucleus. Acts by influencing the nuclear accumulation of beta-catenin through a CRM1-dependent export pathway. Links centrosomes to the nuclear envelope via a microtubule association. Required for proper localization of non-farnesylated prelamin-A/C. Together with NEMP1, contributes to nuclear envelope stiffness in germ cells. The protein is Emerin (Emd) of Rattus norvegicus (Rat).